The sequence spans 289 residues: ATP synthase gamma chain (289 aa).

The protein belongs to the ATPase gamma chain family. As to quaternary structure, F-type ATPases have 2 components, CF(1) - the catalytic core - and CF(0) - the membrane proton channel. CF(1) has five subunits: alpha(3), beta(3), gamma(1), delta(1), epsilon(1). CF(0) has three main subunits: a, b and c.

It localises to the cell inner membrane. In terms of biological role, produces ATP from ADP in the presence of a proton gradient across the membrane. The gamma chain is believed to be important in regulating ATPase activity and the flow of protons through the CF(0) complex. This Acinetobacter baumannii (strain AB307-0294) protein is ATP synthase gamma chain.